The following is a 168-amino-acid chain: Transmembrane protein 229b (168 aa).

Over 1–14 (MAPPEPLTALSRWY) the chain is Cytoplasmic. The helical transmembrane segment at 15 to 35 (LYAIHGYFCEVMFTAAWDFVV) threads the bilayer. Over 36 to 40 (NYNWK) the chain is Extracellular. A helical membrane pass occupies residues 41-61 (FPGVTSVWALFIYGTSILIVE). The Cytoplasmic segment spans residues 62–72 (KMYLYLKDKCN). The helical transmembrane segment at 73–93 (ILIRCLIYTLWTYIWEFSTGL) threads the bilayer. The Extracellular portion of the chain corresponds to 94–109 (ILRQFNACPWDYSQFD). A helical transmembrane segment spans residues 110 to 130 (FDFMGLITLEYAIPWFCASFI). Over 131 to 168 (MEQLVIRNTLRLRFDEHAEPGSPVMSTVSMANGHVKCN) the chain is Cytoplasmic.

This sequence belongs to the TMEM229 family.

It localises to the membrane. This is Transmembrane protein 229b (tmem229b) from Xenopus tropicalis (Western clawed frog).